Consider the following 597-residue polypeptide: Probable serine/threonine-protein kinase DDB_G0281745 (597 aa).

The span at 49–61 shows a compositional bias: polar residues; sequence TIDNSNGKQSTTP. Positions 49 to 320 are disordered; sequence TIDNSNGKQS…RNNESTATTA (272 aa). The segment covering 72–97 has biased composition (pro residues); sequence QPPPQQSQQQPPQPLKPIPATRPVPT. Positions 114 to 140 are enriched in polar residues; that stretch reads TLPTTNSSTKYSTLPSRQFFEVSSSPG. Low complexity predominate over residues 157-168; that stretch reads SLSSNQNGSNLN. Over residues 208 to 234 the composition is skewed to pro residues; sequence PSPPSPPLQSPQPTPQQQPPPLKPIPQ. Residues 235–264 are compositionally biased toward low complexity; the sequence is PQQQQQQQQQQQQQQQQQQQQQQQQQQQQQ. The segment covering 265–274 has biased composition (pro residues); the sequence is QPPPLKPIPQ. Residues 275–301 are compositionally biased toward low complexity; it reads PQQSQPTQPIKSQIQIPITNTNGNTNG. The 252-residue stretch at 334–585 folds into the Protein kinase domain; the sequence is KFVGNEIGSG…KVLDTIQNIY (252 aa). ATP contacts are provided by residues 340–348 and lysine 361; that span reads IGSGKYGSV. The active-site Proton acceptor is the aspartate 454.

Belongs to the protein kinase superfamily. TKL Ser/Thr protein kinase family.

It carries out the reaction L-seryl-[protein] + ATP = O-phospho-L-seryl-[protein] + ADP + H(+). The enzyme catalyses L-threonyl-[protein] + ATP = O-phospho-L-threonyl-[protein] + ADP + H(+). The chain is Probable serine/threonine-protein kinase DDB_G0281745 from Dictyostelium discoideum (Social amoeba).